The primary structure comprises 37 residues: Large ribosomal subunit protein bL36c (37 aa).

Belongs to the bacterial ribosomal protein bL36 family.

The protein resides in the plastid. Its subcellular location is the chloroplast. The chain is Large ribosomal subunit protein bL36c from Cucumis sativus (Cucumber).